A 354-amino-acid chain; its full sequence is Holliday junction branch migration complex subunit RuvB (354 aa).

Positions 4-190 are large ATPase domain (RuvB-L); it reads TDKLAAERII…FGIVARLEFY (187 aa). ATP is bound by residues leucine 29, arginine 30, glycine 71, lysine 74, threonine 75, threonine 76, 137-139, arginine 180, tyrosine 190, and arginine 227; that span reads EDY. Threonine 75 contributes to the Mg(2+) binding site. Residues 191 to 261 are small ATPAse domain (RuvB-S); it reads NAEELARIVT…VADAALKMLD (71 aa). The head domain (RuvB-H) stretch occupies residues 264-354; sequence AVGFDLMDRK…LPGLWDSAAT (91 aa). Residues arginine 300, arginine 319, and arginine 324 each coordinate DNA.

The protein belongs to the RuvB family. Homohexamer. Forms an RuvA(8)-RuvB(12)-Holliday junction (HJ) complex. HJ DNA is sandwiched between 2 RuvA tetramers; dsDNA enters through RuvA and exits via RuvB. An RuvB hexamer assembles on each DNA strand where it exits the tetramer. Each RuvB hexamer is contacted by two RuvA subunits (via domain III) on 2 adjacent RuvB subunits; this complex drives branch migration. In the full resolvosome a probable DNA-RuvA(4)-RuvB(12)-RuvC(2) complex forms which resolves the HJ.

It is found in the cytoplasm. It catalyses the reaction ATP + H2O = ADP + phosphate + H(+). In terms of biological role, the RuvA-RuvB-RuvC complex processes Holliday junction (HJ) DNA during genetic recombination and DNA repair, while the RuvA-RuvB complex plays an important role in the rescue of blocked DNA replication forks via replication fork reversal (RFR). RuvA specifically binds to HJ cruciform DNA, conferring on it an open structure. The RuvB hexamer acts as an ATP-dependent pump, pulling dsDNA into and through the RuvAB complex. RuvB forms 2 homohexamers on either side of HJ DNA bound by 1 or 2 RuvA tetramers; 4 subunits per hexamer contact DNA at a time. Coordinated motions by a converter formed by DNA-disengaged RuvB subunits stimulates ATP hydrolysis and nucleotide exchange. Immobilization of the converter enables RuvB to convert the ATP-contained energy into a lever motion, pulling 2 nucleotides of DNA out of the RuvA tetramer per ATP hydrolyzed, thus driving DNA branch migration. The RuvB motors rotate together with the DNA substrate, which together with the progressing nucleotide cycle form the mechanistic basis for DNA recombination by continuous HJ branch migration. Branch migration allows RuvC to scan DNA until it finds its consensus sequence, where it cleaves and resolves cruciform DNA. This chain is Holliday junction branch migration complex subunit RuvB, found in Paraburkholderia phytofirmans (strain DSM 17436 / LMG 22146 / PsJN) (Burkholderia phytofirmans).